We begin with the raw amino-acid sequence, 891 residues long: Protein translocase subunit SecA 1 (891 aa).

Residues glutamine 85, 103-107 (GEGKT), and aspartate 491 each bind ATP. Residues cysteine 877, cysteine 879, cysteine 888, and cysteine 889 each contribute to the Zn(2+) site.

It belongs to the SecA family. Monomer and homodimer. Part of the essential Sec protein translocation apparatus which comprises SecA, SecYEG and auxiliary proteins SecDF. Other proteins may also be involved. Requires Zn(2+) as cofactor.

Its subcellular location is the cell membrane. It is found in the cytoplasm. It carries out the reaction ATP + H2O + cellular proteinSide 1 = ADP + phosphate + cellular proteinSide 2.. Functionally, part of the Sec protein translocase complex. Interacts with the SecYEG preprotein conducting channel. Has a central role in coupling the hydrolysis of ATP to the transfer of proteins into and across the cell membrane, serving as an ATP-driven molecular motor driving the stepwise translocation of polypeptide chains across the membrane. This is Protein translocase subunit SecA 1 from Clostridioides difficile (strain 630) (Peptoclostridium difficile).